Consider the following 395-residue polypeptide: MKVAIFDAFNGASGDMILASLLGVGISEEEIDEVVKALGIDVNYSMTTVSVRGISARRVEVEERDGERSFKEVLEIIRSSNLEEGVKKNAIAVFELIARAEGKVHGRDYREGVFHEVGADDAIFDVVCCVKAFENLKTAGYEFFATPVRAGSGFVEFSHGKYPVPPPAVLEILKSSNLEVVMDGEGELLTPTGAAILSHYCKPLKPFPIRVKEVSYGAGKRETDVPNVLRLILGETAFHDSIVVIETSVDDLSGEMIGYAMKKLLERDDVLDAVIIPAYGKKMRPASILKVISPTHRSEEVAAEVMRLTGSLGIRIIPVHHRLISERMEEVVKVEISGKEFDVRVKRSYPGFRHLKPEFDDIAVIADELNIPPHVVYREIVRKIVGAENADSNGQ.

This sequence belongs to the LarC family.

The sequence is that of Putative nickel insertion protein from Archaeoglobus fulgidus (strain ATCC 49558 / DSM 4304 / JCM 9628 / NBRC 100126 / VC-16).